The primary structure comprises 230 residues: MNQPKAVILLSGGLDSATTAAIALASGYEAIALSLFYGQRHHKEIEAAQKIVQVLGIKEHYSLEVNLSQWGGSALTDQSIEVPKAGLNPHLIPITYVPGRNTVFIAIALSLAEAKGAQAIYLGINAIDYSGYPDCRPEYLEAFQKLANLSSKIGVEGKTIQLIAPLVKDSKVDIVRRAVRLGVPIADTWSCYQGEDEPCGLCDSCRIRDRALIEAGYPELATEIGRKLSH.

10-20 (LSGGLDSATTA) contributes to the ATP binding site. 4 residues coordinate Zn(2+): Cys191, Cys199, Cys202, and Cys205.

The protein belongs to the QueC family. Zn(2+) is required as a cofactor.

It catalyses the reaction 7-carboxy-7-deazaguanine + NH4(+) + ATP = 7-cyano-7-deazaguanine + ADP + phosphate + H2O + H(+). Its pathway is purine metabolism; 7-cyano-7-deazaguanine biosynthesis. In terms of biological role, catalyzes the ATP-dependent conversion of 7-carboxy-7-deazaguanine (CDG) to 7-cyano-7-deazaguanine (preQ(0)). The sequence is that of 7-cyano-7-deazaguanine synthase from Gloeothece citriformis (strain PCC 7424) (Cyanothece sp. (strain PCC 7424)).